Reading from the N-terminus, the 331-residue chain is ABSCISIC ACID-INSENSITIVE 5-like protein 1 (331 aa).

Residues S40 and S98 each carry the phosphoserine modification. The residue at position 143 (T143) is a Phosphothreonine. In terms of domain architecture, bZIP spans 247–310 (MERRQRRMIK…RQEIISRSKQ (64 aa)). Residues 249–268 (RRQRRMIKNRESAARSRARR) are basic motif. The leucine-zipper stretch occupies residues 275 to 289 (LELELNNLTEENTKL). A compositionally biased stretch (basic and acidic residues) spans 296-320 (NEKKRRQEIISRSKQVTKEKSGDKL). Positions 296–331 (NEKKRRQEIISRSKQVTKEKSGDKLRKIRRMASAGW) are disordered.

The protein belongs to the bZIP family. ABI5 subfamily. DNA-binding heterodimer with AREB3/DPBF3 or EEL/DPBF4. Interacts with the AFP proteins AFP1, AFP2 and AFP3. As to expression, predominantly expressed in seeds.

The protein resides in the nucleus. Its function is as follows. Could participate in abscisic acid-regulated gene expression during seed development. The polypeptide is ABSCISIC ACID-INSENSITIVE 5-like protein 1 (DPBF2) (Arabidopsis thaliana (Mouse-ear cress)).